Reading from the N-terminus, the 132-residue chain is Fluoride-specific ion channel FluC (132 aa).

Transmembrane regions (helical) follow at residues 5–25 (LVAI…LGMW), 36–56 (GTLA…ALFA), 68–88 (FVVT…AEMF), and 103–123 (IAVH…TFGA). Na(+) contacts are provided by Gly75 and Thr78.

The protein belongs to the fluoride channel Fluc/FEX (TC 1.A.43) family.

Its subcellular location is the cell inner membrane. It catalyses the reaction fluoride(in) = fluoride(out). With respect to regulation, na(+) is not transported, but it plays an essential structural role and its presence is essential for fluoride channel function. Fluoride-specific ion channel. Important for reducing fluoride concentration in the cell, thus reducing its toxicity. The protein is Fluoride-specific ion channel FluC of Chromohalobacter salexigens (strain ATCC BAA-138 / DSM 3043 / CIP 106854 / NCIMB 13768 / 1H11).